A 629-amino-acid polypeptide reads, in one-letter code: tRNA uridine 5-carboxymethylaminomethyl modification enzyme MnmG (629 aa).

Residues 13–18 (GGGHAG), valine 125, and serine 180 contribute to the FAD site. 273-287 (GPRYCPSIEDKIHRF) is a binding site for NAD(+). Glutamine 370 contacts FAD.

This sequence belongs to the MnmG family. As to quaternary structure, homodimer. Heterotetramer of two MnmE and two MnmG subunits. It depends on FAD as a cofactor.

The protein localises to the cytoplasm. Functionally, NAD-binding protein involved in the addition of a carboxymethylaminomethyl (cmnm) group at the wobble position (U34) of certain tRNAs, forming tRNA-cmnm(5)s(2)U34. The sequence is that of tRNA uridine 5-carboxymethylaminomethyl modification enzyme MnmG from Shewanella sp. (strain ANA-3).